The chain runs to 198 residues: Carnitine operon protein CaiE (198 aa).

The interval 179–198 (VEENRPRLKGTTDVKPKSAQ) is disordered. Residues 180-198 (EENRPRLKGTTDVKPKSAQ) are compositionally biased toward basic and acidic residues.

The protein belongs to the transferase hexapeptide repeat family.

The protein operates within amine and polyamine metabolism; carnitine metabolism. Overproduction of CaiE stimulates the activity of CaiB and CaiD. In Salmonella choleraesuis (strain SC-B67), this protein is Carnitine operon protein CaiE.